The sequence spans 205 residues: Recombination protein RecR (205 aa).

The C4-type zinc-finger motif lies at 64–79 (CSRCYFITQGDLCAIC). Residues 87 to 182 (RVICVVEEPL…RVTRLARGLP (96 aa)) form the Toprim domain.

It belongs to the RecR family.

In terms of biological role, may play a role in DNA repair. It seems to be involved in an RecBC-independent recombinational process of DNA repair. It may act with RecF and RecO. In Roseiflexus sp. (strain RS-1), this protein is Recombination protein RecR.